A 497-amino-acid polypeptide reads, in one-letter code: Virion host shutoff protein (497 aa).

Disordered regions lie at residues 122 to 142 (EHDT…PPQD) and 280 to 373 (SVIS…SAEA). Over residues 309-326 (PNERRVISWRRQDDHDYD) the composition is skewed to basic and acidic residues. A compositionally biased stretch (acidic residues) spans 327–344 (SSTEDSDQSDSSEEEEEC).

Belongs to the herpesviridae VHS protein family.

The protein localises to the virion. Its function is as follows. Minor structural protein that acts as an endoribonuclease during lytic infection. Degrades host mRNAs in the cytoplasm by cutting them at preferred sites, including some in regions of translation initiation. This chain is Virion host shutoff protein, found in Equine herpesvirus 1 (strain Ab4p) (EHV-1).